Reading from the N-terminus, the 843-residue chain is Probable inorganic carbon transporter subunit DabA 2 (843 aa).

Residues Cys-352, Asp-354, His-536, and Cys-551 each contribute to the Zn(2+) site.

Belongs to the inorganic carbon transporter (TC 9.A.2) DabA family. As to quaternary structure, forms a complex with DabB. Zn(2+) is required as a cofactor.

It is found in the cell inner membrane. In terms of biological role, part of an energy-coupled inorganic carbon pump. The polypeptide is Probable inorganic carbon transporter subunit DabA 2 (Bradyrhizobium sp. (strain BTAi1 / ATCC BAA-1182)).